The chain runs to 264 residues: Fibroblast growth factor 5 (264 aa).

The signal sequence occupies residues 1 to 20; the sequence is MSLSLLFLIFCSHLIHSAWA. The interval 25-81 is disordered; it reads RLTPEGQPAPPRNPGDSSGSRGRSSATFSSSSASSPVAASPGSQGSGSEHSSFQWSP. Low complexity predominate over residues 38–72; it reads PGDSSGSRGRSSATFSSSSASSPVAASPGSQGSGS. N-linked (GlcNAc...) asparagine glycosylation occurs at asparagine 108. A disordered region spans residues 227–254; the sequence is FTVTVPEKKKPPVKPKVPLSQPRRSPSP.

This sequence belongs to the heparin-binding growth factors family. Interacts with FGFR1 and FGFR2. Affinity between fibroblast growth factors (FGFs) and their receptors is increased by heparan sulfate glycosaminoglycans that function as coreceptors.

The protein localises to the secreted. Functionally, plays an important role in the regulation of cell proliferation and cell differentiation. Required for normal regulation of the hair growth cycle. Functions as an inhibitor of hair elongation by promoting progression from anagen, the growth phase of the hair follicle, into catagen the apoptosis-induced regression phase. This Mus musculus (Mouse) protein is Fibroblast growth factor 5 (Fgf5).